The chain runs to 185 residues: ADP-ribosylation factor-like protein 2 (185 aa).

G2 is lipidated: N-myristoyl glycine. GTP-binding positions include 23–30 (GLDNSGKT), 66–70 (DVGGQ), and 125–128 (NKQD).

This sequence belongs to the small GTPase superfamily. Arf family. Supercomplex made of cofactors A to E. Cofactors A and D function by capturing and stabilizing tubulin in a quasi-native conformation. Cofactor E binds to the cofactor D-tubulin complex; interaction with cofactor C then causes the release of tubulin polypeptides that are committed to the native state. As to expression, expressed in seedlings, leaves, roots and inflorescences.

Its subcellular location is the cytoplasm. Has a role in the cofactor-dependent pathway of microtubule biogenesis. Not essential for cell viability. May play a regulatory role in sequestring TFCD. The chain is ADP-ribosylation factor-like protein 2 (ARL2) from Arabidopsis thaliana (Mouse-ear cress).